A 614-amino-acid chain; its full sequence is MWMAWCVAALSVVAVCGTSHETNTVLRVTKDVLSNAISGMLQQSDALHSALREVPLGVGDIPYNDFHVRGPPPVYTNGKKLDGIYQYGHIETNDNTAQLGGKYRYGEILESEGSIRDLRNSGYRSAENAYGGHRGLGRYRAAPVGRLHRRELQPGEIPPGVATGAVGPGGLLGTGGMLAADGILAGQGGLLGGGGLLGDGGLLGGGGVLGVLGEGGILSTVQGITGLRIVELTLPRVSVRLLPGVGVYLSLYTRVAINGKSLIGFLDIAVEVNITAKVRLTMDRTGYPRLVIERCDTLLGGIKVKLLRGLLPNLVDNLVNRVLADVLPDLLCPIVDVVLGLVNDQLGLVDSLIPLGILGSVQYTFSSLPLVTGEFLELDLNTLVGEAGGGLIDYPLGWPAVSPKPMPELPPMGDNTKSQLAMSANFLGSVLTLLQKQHALDLDITNGMFEELPPLTTATLGALIPKVFQQYPESCPLIIRIQVLNPPSVMLQKDKALVKVLATAEVMVSQPKDLETTICLIDVDTEFLASFSTEGDKLMIDAKLEKTSLNLRTSNVGNFDIGLMEVLVEKIFDLAFMPAMNAVLGSGVPLPKILNIDFSNADIDVLEDLLVLSA.

The N-terminal stretch at M1–T18 is a signal peptide. N273 is a glycosylation site (N-linked (GlcNAc...) asparagine). A disulfide bridge connects residues C295 and C332.

The protein belongs to the BPI/LBP/Plunc superfamily. BPI/LBP family. As to expression, expressed in nasal tissue.

It localises to the secreted. The protein resides in the cytoplasm. In terms of biological role, may have the capacity to recognize and bind specific classes of odorants. May act as a carrier molecule, transporting odorants across the mucus layer to access receptor sites. May serve as a primary defense mechanism by recognizing and removing potentially harmful odorants or pathogenic microorganisms from the mucosa or clearing excess odorant from mucus to enable new odorant stimuli to be received. This Homo sapiens (Human) protein is BPI fold-containing family B member 4 (BPIFB4).